Here is a 567-residue protein sequence, read N- to C-terminus: 2-succinyl-5-enolpyruvyl-6-hydroxy-3-cyclohexene-1-carboxylate synthase (567 aa).

The protein belongs to the TPP enzyme family. MenD subfamily. As to quaternary structure, homodimer. Mg(2+) serves as cofactor. The cofactor is Mn(2+). It depends on thiamine diphosphate as a cofactor.

The catalysed reaction is isochorismate + 2-oxoglutarate + H(+) = 5-enolpyruvoyl-6-hydroxy-2-succinyl-cyclohex-3-ene-1-carboxylate + CO2. Its pathway is quinol/quinone metabolism; 1,4-dihydroxy-2-naphthoate biosynthesis; 1,4-dihydroxy-2-naphthoate from chorismate: step 2/7. The protein operates within quinol/quinone metabolism; menaquinone biosynthesis. Functionally, catalyzes the thiamine diphosphate-dependent decarboxylation of 2-oxoglutarate and the subsequent addition of the resulting succinic semialdehyde-thiamine pyrophosphate anion to isochorismate to yield 2-succinyl-5-enolpyruvyl-6-hydroxy-3-cyclohexene-1-carboxylate (SEPHCHC). In Yersinia pseudotuberculosis serotype IB (strain PB1/+), this protein is 2-succinyl-5-enolpyruvyl-6-hydroxy-3-cyclohexene-1-carboxylate synthase.